Consider the following 214-residue polypeptide: MNQSILSPFGQSEERAIAAINAFKQGNGVLVLDDEDRENEGDLIFPAETITVEQMTMLIRYGSGIVCLCLSDEICQQLDLPPMVTENTSVNKTAFTVTIEAAKGVSTGVSATDRVTTIRAAVADNAKPSDLSRPGHIFPLRAMTGGVLKRRGHTEASVDLARLAGYKAAGVICEITNDDGSMARAPEIVTFAQKFGFPVVTIEDLVAYRQKYDV.

D-ribulose 5-phosphate is bound by residues 37–38 (RE), Asp-42, 150–154 (RRGHT), and Glu-174. Glu-38 is a Mg(2+) binding site. A Mg(2+)-binding site is contributed by His-153.

This sequence belongs to the DHBP synthase family. As to quaternary structure, homodimer. The cofactor is Mg(2+). Mn(2+) is required as a cofactor.

It carries out the reaction D-ribulose 5-phosphate = (2S)-2-hydroxy-3-oxobutyl phosphate + formate + H(+). The protein operates within cofactor biosynthesis; riboflavin biosynthesis; 2-hydroxy-3-oxobutyl phosphate from D-ribulose 5-phosphate: step 1/1. Catalyzes the conversion of D-ribulose 5-phosphate to formate and 3,4-dihydroxy-2-butanone 4-phosphate. The protein is 3,4-dihydroxy-2-butanone 4-phosphate synthase of Pasteurella multocida (strain Pm70).